Reading from the N-terminus, the 379-residue chain is Beta sliding clamp (379 aa).

It belongs to the beta sliding clamp family. Forms a ring-shaped head-to-tail homodimer around DNA which binds and tethers DNA polymerases and other proteins to the DNA. The DNA replisome complex has a single clamp-loading complex (3 tau and 1 each of delta, delta', psi and chi subunits) which binds 3 Pol III cores (1 core on the leading strand and 2 on the lagging strand) each with a beta sliding clamp dimer. Additional proteins in the replisome are other copies of gamma, psi and chi, Ssb, DNA helicase and RNA primase.

It localises to the cytoplasm. In terms of biological role, confers DNA tethering and processivity to DNA polymerases and other proteins. Acts as a clamp, forming a ring around DNA (a reaction catalyzed by the clamp-loading complex) which diffuses in an ATP-independent manner freely and bidirectionally along dsDNA. Initially characterized for its ability to contact the catalytic subunit of DNA polymerase III (Pol III), a complex, multichain enzyme responsible for most of the replicative synthesis in bacteria; Pol III exhibits 3'-5' exonuclease proofreading activity. The beta chain is required for initiation of replication as well as for processivity of DNA replication. This is Beta sliding clamp (dnaN) from Rickettsia felis (strain ATCC VR-1525 / URRWXCal2) (Rickettsia azadi).